The chain runs to 920 residues: Isoleucine--tRNA ligase (920 aa).

The short motif at 58–68 (PYANGHLHLGH) is the 'HIGH' region element. L-isoleucyl-5'-AMP is bound at residue E569. Residues 610-614 (KMSKS) carry the 'KMSKS' region motif. K613 is an ATP binding site. Positions 895, 898, 910, and 913 each coordinate Zn(2+).

This sequence belongs to the class-I aminoacyl-tRNA synthetase family. IleS type 1 subfamily. Monomer. The cofactor is Zn(2+).

The protein localises to the cytoplasm. The catalysed reaction is tRNA(Ile) + L-isoleucine + ATP = L-isoleucyl-tRNA(Ile) + AMP + diphosphate. Its function is as follows. Catalyzes the attachment of isoleucine to tRNA(Ile). As IleRS can inadvertently accommodate and process structurally similar amino acids such as valine, to avoid such errors it has two additional distinct tRNA(Ile)-dependent editing activities. One activity is designated as 'pretransfer' editing and involves the hydrolysis of activated Val-AMP. The other activity is designated 'posttransfer' editing and involves deacylation of mischarged Val-tRNA(Ile). In Helicobacter pylori (strain P12), this protein is Isoleucine--tRNA ligase.